Reading from the N-terminus, the 403-residue chain is S-adenosylmethionine sensor upstream of mTORC1 (403 aa).

Over residues 1–10 (MEPGPGGRGA) the composition is skewed to gly residues. The disordered stretch occupies residues 1-32 (MEPGPGGRGAARGQRPPNAAQPREQERKLEQE). The span at 11–22 (ARGQRPPNAAQP) shows a compositional bias: low complexity. Residues 23-32 (REQERKLEQE) are compositionally biased toward basic and acidic residues. The S-adenosyl-L-methionine site is built by R93, G170, D188, D200, F201, and S242.

Belongs to the BMT2/SAMTOR family. Interacts with the GATOR1 complex; interaction is disrupted when SAMTOR binds S-adenosyl-L-methionine. Interacts with the KICSTOR complex; interaction is disrupted when SAMTOR binds S-adenosyl-L-methionine.

Its function is as follows. S-adenosyl-L-methionine-binding protein that acts as an inhibitor of mTORC1 signaling via interaction with the GATOR1 and KICSTOR complexes. Acts as a sensor of S-adenosyl-L-methionine to signal methionine sufficiency to mTORC1: in presence of methionine, binds S-adenosyl-L-methionine, leading to disrupt interaction with the GATOR1 and KICSTOR complexes and promote mTORC1 signaling. Upon methionine starvation, S-adenosyl-L-methionine levels are reduced, thereby promoting the association with GATOR1 and KICSTOR, leading to inhibit mTORC1 signaling. Probably also acts as a S-adenosyl-L-methionine-dependent methyltransferase. This Mus musculus (Mouse) protein is S-adenosylmethionine sensor upstream of mTORC1.